A 100-amino-acid polypeptide reads, in one-letter code: Small ribosomal subunit protein uS14c (100 aa).

Belongs to the universal ribosomal protein uS14 family. Part of the 30S ribosomal subunit.

Its subcellular location is the plastid. It localises to the chloroplast. Its function is as follows. Binds 16S rRNA, required for the assembly of 30S particles. This Phaeodactylum tricornutum (strain CCAP 1055/1) protein is Small ribosomal subunit protein uS14c.